The following is a 248-amino-acid chain: tRNA1(Val) (adenine(37)-N6)-methyltransferase (248 aa).

The protein belongs to the methyltransferase superfamily. tRNA (adenine-N(6)-)-methyltransferase family.

Its subcellular location is the cytoplasm. The enzyme catalyses adenosine(37) in tRNA1(Val) + S-adenosyl-L-methionine = N(6)-methyladenosine(37) in tRNA1(Val) + S-adenosyl-L-homocysteine + H(+). Its function is as follows. Specifically methylates the adenine in position 37 of tRNA(1)(Val) (anticodon cmo5UAC). In Musicola paradisiaca (strain Ech703) (Dickeya paradisiaca), this protein is tRNA1(Val) (adenine(37)-N6)-methyltransferase.